A 1049-amino-acid polypeptide reads, in one-letter code: MREAAERRQQLELEHEQALAILNAKQQEIQLLQQSKVRELEEKCRVQSEQFNLLSRDLEKFRQHAGSIDLLGSNSVALLDVPLAPGKPFSQYMNGLATSIHKGHEGPTGHYSVIGDYIPLSGDKLESPCVKPSFLLRSSSPRCRFESEMDDDRSSNKSKHSSSGKVHLCVARYSYNPFDGPNENPEAELPLTAGKYLYVYGDMDEDGFYEGELLDGQRGLVPSNFVDFIQDNESRFAGTLGSEQDQNFLNHSGISLERDSILHLHSPTQVDSGITDNGGGTLDVNIDDIGEDIVPYPRKITLIKQLAKSVIVGWEPPAVPPGWGTVSSYNVLVDKETRMSLALGRRTKALIEKLNTAACTYRISVQCVTSRGNSDELQCTLLVGKDVVVAPSQLRVDNITQISAQLSWLPTNSNYSHIIFLNEEELDIVKAARYKYQFFNLRPNMAYKVKVLAQPHQMPWQLPLEQREKDEACVEFSTLPAGPPAPPQDVTVQAGATTASVQVSWKPPALTPTGLSNGANVTGYGVYAKGQRVAEVIAPTANGAAVELVRLRSLEAKAVSVRTLSAQGESMDSALAAIPPDLLVPPAPHPRTAPPPKPLTSDMDTKDLGPHVKVDESWEQSRPPGPAHGHMLEPPDMHSTGPGRRSPSPSRILPQPQGAPVSTTVAKAMAREAAQRVAETSKLEKRSLFLEQSSAGPYANSDEEDGYASPEVKRRGTSVDDFLKGSELGQQPHCCHGDEYHTESSRGSDLSDIMEEDEEELYSEMQLEDGGRRRPSGTSHNALKILGNSALMGRGDRMEHVSRRYSHSGGGPQRHRPMAPSIDEYTGRDHLSPDFYDESETDPGAEELPARIFVALFDYDPLTMSPNPDAAEEELPFKEGQIIKVYGDKDADGFYRGETCARLGLIPCNMVSEIHADDEEMMDQLLRQGFLPLNTPVEKIERSRRSGRGHSVPTRRMVALYDYDPRESSPNVDVEAELLFCTGDIITVFGEIDEDGFYYGELNGQKGLVPSNFLEEVPDDVEVHLSDAPPHYSHDPPMRTKAKRVSQPP.

One can recognise an SH3 1 domain in the interval 164–231 (GKVHLCVARY…PSNFVDFIQD (68 aa)). Fibronectin type-III domains lie at 294–387 (VPYP…GKDV), 390–471 (APSQ…EKDE), and 486–587 (PPQD…VPPA). 3 disordered regions span residues 580–664 (PDLL…VSTT), 694–714 (SAGPYANSDEEDGYASPEVKR), and 728–750 (LGQQPHCCHGDEYHTESSRGSDL). The segment covering 582–598 (LLVPPAPHPRTAPPPKP) has biased composition (pro residues). Over residues 603 to 616 (MDTKDLGPHVKVDE) the composition is skewed to basic and acidic residues. Over residues 641 to 651 (GPGRRSPSPSR) the composition is skewed to low complexity. Residues Ser-701 and Ser-709 each carry the phosphoserine modification. The segment covering 735–746 (CHGDEYHTESSR) has biased composition (basic and acidic residues). Phosphoserine is present on residues Ser-832 and Ser-839. At Thr-841 the chain carries Phosphothreonine. SH3 domains are found at residues 848 to 916 (LPAR…EIHA) and 952 to 1019 (VPTR…EVPD). A disordered region spans residues 1024–1049 (HLSDAPPHYSHDPPMRTKAKRVSQPP). The span at 1040-1049 (TKAKRVSQPP) shows a compositional bias: basic residues.

The protein belongs to the RIMBP family. As to quaternary structure, interacts with CACNA1D and CACNA1B, and potentially with other Ca(2+) channel alpha-1 isoforms. Interacts with RIMS1 and RIMS2.

The protein localises to the cell membrane. It is found in the synapse. Its function is as follows. Plays a role in the synaptic transmission as bifunctional linker that interacts simultaneously with RIMS1, RIMS2, CACNA1D and CACNA1B. The protein is RIMS-binding protein 2 (Rimbp2) of Rattus norvegicus (Rat).